A 259-amino-acid polypeptide reads, in one-letter code: Protein unc-50 homolog B (259 aa).

The span at 1–11 (MLPTTSVSPRS) shows a compositional bias: polar residues. The interval 1–21 (MLPTTSVSPRSPDNGILSPRD) is disordered. Over 1–82 (MLPTTSVSPR…TKDQWARDDP (82 aa)) the chain is Cytoplasmic. A helical transmembrane segment spans residues 83–103 (AFLVLLGIWLCVSTVGFGFVL). Over 104 to 109 (DMSFFE) the chain is Lumenal. A helical membrane pass occupies residues 110-130 (TFTLLLWVVFIDCVGVGLLIA). Over 131-158 (TSMWFVSNKYMVNRQGKDYDVEWGYTFD) the chain is Cytoplasmic. A helical transmembrane segment spans residues 159–179 (VHLNAFYPLLVILHFIQLFFI). The Lumenal segment spans residues 180–181 (NH). A helical membrane pass occupies residues 182–202 (VILTGWFIGCFVGNTLWLIAI). Topologically, residues 203-222 (GYYIYITFLGYSALPFLKNT) are cytoplasmic. The helical transmembrane segment at 223-243 (VVLLYPFAALALLYILSLALG) threads the bilayer. Over 244–259 (WNFTAKLCLFYKYRVR) the chain is Lumenal.

This sequence belongs to the unc-50 family.

Its subcellular location is the nucleus inner membrane. The protein localises to the golgi apparatus membrane. In terms of biological role, involved in the cell surface expression of neuronal nicotinic receptors. Binds RNA. This Xenopus laevis (African clawed frog) protein is Protein unc-50 homolog B (unc50-b).